Reading from the N-terminus, the 227-residue chain is Putative N-acetylmannosamine-6-phosphate 2-epimerase (227 aa).

It belongs to the NanE family.

The enzyme catalyses an N-acyl-D-glucosamine 6-phosphate = an N-acyl-D-mannosamine 6-phosphate. The protein operates within amino-sugar metabolism; N-acetylneuraminate degradation; D-fructose 6-phosphate from N-acetylneuraminate: step 3/5. Functionally, converts N-acetylmannosamine-6-phosphate (ManNAc-6-P) to N-acetylglucosamine-6-phosphate (GlcNAc-6-P). The sequence is that of Putative N-acetylmannosamine-6-phosphate 2-epimerase from Shouchella clausii (strain KSM-K16) (Alkalihalobacillus clausii).